The following is a 287-amino-acid chain: Protease HtpX (287 aa).

Helical transmembrane passes span 4-24 (IMLF…VLNI) and 36-56 (LSGL…ISLM). His143 serves as a coordination point for Zn(2+). The active site involves Glu144. His147 provides a ligand contact to Zn(2+). The next 2 helical transmembrane spans lie at 158–178 (LMQG…ANIV) and 192–212 (MVYF…ASFI). Glu221 is a binding site for Zn(2+).

This sequence belongs to the peptidase M48B family. The cofactor is Zn(2+).

Its subcellular location is the cell inner membrane. This is Protease HtpX from Vibrio parahaemolyticus serotype O3:K6 (strain RIMD 2210633).